The primary structure comprises 288 residues: GETISIYYDPGKFPALMPLKNGNYEERNGGVPQRGNITIHLQQFNEDLDKMTPDKNFGGIGVIDFERWKPIFRQNWGNTEIHKKYSIELVRYEHPKWSESMIEAEATKKFEKYARLFMEETLKLAKKTRKRAKWGYYGFPYCYNYTPNNPGPDCDAKAMIENDRLSWMYNNQEILFPSVYVRHELTPDQRVYLVQGRIKEAVRISNNLKHSPKVLSYWWYVYQDKMDIFLSETDVKKTFQEIVTNGGDGIIIWGSSSDVNSLSKCKRLREYLLNTLGPFAVNVTETVN.

An N-linked (GlcNAc...) asparagine glycan is attached at asparagine 36. Glutamate 66 serves as the catalytic Proton donor. The cysteines at positions 142 and 154 are disulfide-linked. Asparagine 282 carries an N-linked (GlcNAc...) asparagine glycan.

It belongs to the glycosyl hydrolase 56 family. In terms of tissue distribution, expressed by the venom gland.

It is found in the secreted. It carries out the reaction Random hydrolysis of (1-&gt;4)-linkages between N-acetyl-beta-D-glucosamine and D-glucuronate residues in hyaluronate.. Its function is as follows. Hydrolyzes high molecular weight hyaluronic acid to produce small oligosaccharides. The polypeptide is Hyaluronidase (Polybia paulista (Neotropical social wasp)).